A 128-amino-acid polypeptide reads, in one-letter code: Fluoride-specific ion channel FluC (128 aa).

4 helical membrane-spanning segments follow: residues 5–25 (IVAI…LSLA), 35–55 (LGTL…AVVF), 67–87 (LFVI…SVEV), and 96–116 (FGWA…LTAL). Na(+)-binding residues include glycine 75 and threonine 78.

The protein belongs to the fluoride channel Fluc/FEX (TC 1.A.43) family.

Its subcellular location is the cell inner membrane. It catalyses the reaction fluoride(in) = fluoride(out). Its activity is regulated as follows. Na(+) is not transported, but it plays an essential structural role and its presence is essential for fluoride channel function. Fluoride-specific ion channel. Important for reducing fluoride concentration in the cell, thus reducing its toxicity. The sequence is that of Fluoride-specific ion channel FluC from Burkholderia lata (strain ATCC 17760 / DSM 23089 / LMG 22485 / NCIMB 9086 / R18194 / 383).